Here is a 95-residue protein sequence, read N- to C-terminus: Co-chaperonin GroES (95 aa).

Belongs to the GroES chaperonin family. In terms of assembly, heptamer of 7 subunits arranged in a ring. Interacts with the chaperonin GroEL.

The protein resides in the cytoplasm. In terms of biological role, together with the chaperonin GroEL, plays an essential role in assisting protein folding. The GroEL-GroES system forms a nano-cage that allows encapsulation of the non-native substrate proteins and provides a physical environment optimized to promote and accelerate protein folding. GroES binds to the apical surface of the GroEL ring, thereby capping the opening of the GroEL channel. This chain is Co-chaperonin GroES, found in Rickettsia bellii (strain RML369-C).